A 348-amino-acid polypeptide reads, in one-letter code: Bombesin receptor-activated protein C6orf89 homolog (348 aa).

Topologically, residues M1–L58 are cytoplasmic. Residues I59–I79 form a helical membrane-spanning segment. Residues Q80 to L348 lie on the Extracellular side of the membrane.

In terms of assembly, homodimer. Interacts with BRS3. Interacts (via N-terminus) with SIN3B. Post-translationally, glycosylated.

It is found in the golgi apparatus membrane. The protein localises to the cytoplasm. Functionally, exhibits histone deacetylase (HDAC) enhancer properties. May play a role in cell cycle progression and wound repair of bronchial epithelial cells. In Rattus norvegicus (Rat), this protein is Bombesin receptor-activated protein C6orf89 homolog.